The primary structure comprises 475 residues: Ribulose bisphosphate carboxylase large chain (475 aa).

The propeptide occupies 1 to 2 (MS). Proline 3 carries the post-translational modification N-acetylproline. Lysine 14 bears the N6,N6,N6-trimethyllysine mark. Residues asparagine 123 and threonine 173 each contribute to the substrate site. Catalysis depends on lysine 175, which acts as the Proton acceptor. Lysine 177 is a substrate binding site. Positions 201, 203, and 204 each coordinate Mg(2+). At lysine 201 the chain carries N6-carboxylysine. Histidine 294 functions as the Proton acceptor in the catalytic mechanism. Residues arginine 295, histidine 327, and serine 379 each contribute to the substrate site.

The protein belongs to the RuBisCO large chain family. Type I subfamily. As to quaternary structure, heterohexadecamer of 8 large chains and 8 small chains; disulfide-linked. The disulfide link is formed within the large subunit homodimers. Requires Mg(2+) as cofactor. The disulfide bond which can form in the large chain dimeric partners within the hexadecamer appears to be associated with oxidative stress and protein turnover.

It is found in the plastid. The protein localises to the chloroplast. It catalyses the reaction 2 (2R)-3-phosphoglycerate + 2 H(+) = D-ribulose 1,5-bisphosphate + CO2 + H2O. The enzyme catalyses D-ribulose 1,5-bisphosphate + O2 = 2-phosphoglycolate + (2R)-3-phosphoglycerate + 2 H(+). In terms of biological role, ruBisCO catalyzes two reactions: the carboxylation of D-ribulose 1,5-bisphosphate, the primary event in carbon dioxide fixation, as well as the oxidative fragmentation of the pentose substrate in the photorespiration process. Both reactions occur simultaneously and in competition at the same active site. This Pinus koraiensis (Korean pine) protein is Ribulose bisphosphate carboxylase large chain.